Reading from the N-terminus, the 810-residue chain is MSKKGRNKGEKPEALIVALQAANEDLRTKLTDIQIELHQEKSKVSKLEREKTQEAKRIRELEQRKHTVLVTELKAKLHEEKMKELQAVRENLIKQHEQEMSRTVKVRDGEIQRLKSALCALRDGSSDKVRTALTIEAREEARKLFDTERLKLLQEIADLKTAKKQVDEALSNMIQADKIKAGDLRSEHQSHQEAISKIKWESERDIRRLMDEIKAKDRIIFSLEKELETQTGYVQKLQLQKEALDEQLFLVKEAECNMSSPKREIPGRAGDGSEHCSSPDLRRNQKRIAELNATIRKLEDRNTLLGDERNELLKRVRETEKQCKPLLERNKCLAKRNDELMVSLQRMEEKLKAVTKENSEMREKITSHPPLKKLKSLNDLDQANEEQETEFLKLQVIEQQNIIDELTRDREKLIRRRKHRRSSKPIKRPVLDPFIGYDEDSMDSETSSMASFRTDRTPATPDDDLDESLAAEESELRFRQLTKEYQALQRAYALLQEQTGGIIDAEREAKAQEQLQAEVLRYKAKIEDLEATLAQKGQDSHWVEDKQLFIKRNQELLEKIEKQEAENHRLQQELQDARDQNELLEFRNLELEERERRSPPFNLQIHPFSDGVSALQIYCMKEGVKDVNIPDLIKQLDILGDNGNLRNEEQVAIIQASTVLSLAEKWIQQIEGAEAALHQKMMELESDMEQFCKIKGYLEEELDYRKQALDQAYMRIQELEATLYNALQQETVIKFGELLSEKQQEELRTAVEKLRRQMLRKSREYDCQILQERMELLQQAHQRIRDLEDKTDIQKRQIKDLEEKSNRKHG.

Coiled coils occupy residues 13-102, 148-178, and 207-244; these read EALI…EMSR, ERLK…QADK, and RRLM…KEAL. Residues 261–274 show a composition bias toward basic and acidic residues; it reads PKREIPGRAGDGSE. Disordered regions lie at residues 261–280 and 437–465; these read PKRE…SSPD and YDED…DDDL. The stretch at 280 to 419 forms a coiled coil; sequence DLRRNQKRIA…REKLIRRRKH (140 aa). Coiled-coil stretches lie at residues 468–597 and 664–808; these read SLAA…RERR and EKWI…SNRK.

This sequence belongs to the JAKMIP family. Highly expressed in brain, moderately expressed in thymus, spleen and lung, and weakly expressed in kidney, liver and peripheral blood lymphocytes. Also expressed in adrenal and pituitary glands, as well as testis.

The protein localises to the golgi apparatus. This is Janus kinase and microtubule-interacting protein 2 (JAKMIP2) from Homo sapiens (Human).